The following is a 95-amino-acid chain: Aspartyl/glutamyl-tRNA(Asn/Gln) amidotransferase subunit C (95 aa).

This sequence belongs to the GatC family. Heterotrimer of A, B and C subunits.

The enzyme catalyses L-glutamyl-tRNA(Gln) + L-glutamine + ATP + H2O = L-glutaminyl-tRNA(Gln) + L-glutamate + ADP + phosphate + H(+). It catalyses the reaction L-aspartyl-tRNA(Asn) + L-glutamine + ATP + H2O = L-asparaginyl-tRNA(Asn) + L-glutamate + ADP + phosphate + 2 H(+). Functionally, allows the formation of correctly charged Asn-tRNA(Asn) or Gln-tRNA(Gln) through the transamidation of misacylated Asp-tRNA(Asn) or Glu-tRNA(Gln) in organisms which lack either or both of asparaginyl-tRNA or glutaminyl-tRNA synthetases. The reaction takes place in the presence of glutamine and ATP through an activated phospho-Asp-tRNA(Asn) or phospho-Glu-tRNA(Gln). The polypeptide is Aspartyl/glutamyl-tRNA(Asn/Gln) amidotransferase subunit C (Shouchella clausii (strain KSM-K16) (Alkalihalobacillus clausii)).